The sequence spans 155 residues: SsrA-binding protein (155 aa).

This sequence belongs to the SmpB family.

It localises to the cytoplasm. Its function is as follows. Required for rescue of stalled ribosomes mediated by trans-translation. Binds to transfer-messenger RNA (tmRNA), required for stable association of tmRNA with ribosomes. tmRNA and SmpB together mimic tRNA shape, replacing the anticodon stem-loop with SmpB. tmRNA is encoded by the ssrA gene; the 2 termini fold to resemble tRNA(Ala) and it encodes a 'tag peptide', a short internal open reading frame. During trans-translation Ala-aminoacylated tmRNA acts like a tRNA, entering the A-site of stalled ribosomes, displacing the stalled mRNA. The ribosome then switches to translate the ORF on the tmRNA; the nascent peptide is terminated with the 'tag peptide' encoded by the tmRNA and targeted for degradation. The ribosome is freed to recommence translation, which seems to be the essential function of trans-translation. The protein is SsrA-binding protein of Streptococcus equi subsp. zooepidemicus (strain MGCS10565).